Consider the following 460-residue polypeptide: tRNA modification GTPase MnmE (460 aa).

(6S)-5-formyl-5,6,7,8-tetrahydrofolate contacts are provided by Arg-29, Glu-86, and Lys-126. A TrmE-type G domain is found at 222-383; that stretch reads GMRVVIAGRP…LAEHLKECMG (162 aa). K(+) is bound at residue Asn-232. Residues 232-237, 251-257, 276-279, and 341-344 each bind GTP; these read NAGKSS, TAIAGTT, DTAG, and NKAD. Residue Ser-236 coordinates Mg(2+). Residues Thr-251, Ile-253, and Thr-256 each coordinate K(+). Thr-257 provides a ligand contact to Mg(2+). Residue Lys-460 participates in (6S)-5-formyl-5,6,7,8-tetrahydrofolate binding.

This sequence belongs to the TRAFAC class TrmE-Era-EngA-EngB-Septin-like GTPase superfamily. TrmE GTPase family. As to quaternary structure, homodimer. Heterotetramer of two MnmE and two MnmG subunits. It depends on K(+) as a cofactor.

Its subcellular location is the cytoplasm. Its function is as follows. Exhibits a very high intrinsic GTPase hydrolysis rate. Involved in the addition of a carboxymethylaminomethyl (cmnm) group at the wobble position (U34) of certain tRNAs, forming tRNA-cmnm(5)s(2)U34. This Pseudoalteromonas atlantica (strain T6c / ATCC BAA-1087) protein is tRNA modification GTPase MnmE.